The following is a 1597-amino-acid chain: Protein STU1 (1597 aa).

4 disordered regions span residues 220–265, 519–958, 1005–1154, and 1307–1332; these read GNSS…PSSS, DKVN…RPIH, DAEA…ELNT, and SQRP…SSLV. Positions 535–552 are enriched in basic and acidic residues; that stretch reads APRESLKEVMRRSRESSV. Positions 577-605 are enriched in low complexity; that stretch reads SSGLVGRSLSGSNLTDRSNRLSSTSTSSR. Composition is skewed to polar residues over residues 610 to 622 and 632 to 645; these read AVSD…QMTR and PSLT…SLTR. Composition is skewed to basic and acidic residues over residues 660–673 and 694–708; these read GSRE…DQNR and ESSR…DPSR. The span at 709-726 shows a compositional bias: polar residues; sequence ESSLAPSVHSSTAISRES. A compositionally biased stretch (low complexity) spans 765 to 781; sequence EETMNEVTTAEATATTA. Polar residues-rich tracts occupy residues 791–801 and 808–822; these read PRESTPPNSSP and PATQ…TGKS. A compositionally biased stretch (basic and acidic residues) spans 832 to 846; sequence ELSRDLNGESKHLKE. 3 stretches are compositionally biased toward polar residues: residues 918 to 933, 1013 to 1025, and 1036 to 1045; these read DSQS…QSEP, TEQT…SDTA, and NSEQGPSTEP. The span at 1081-1091 shows a compositional bias: basic and acidic residues; sequence ASDEIETDHTK. The span at 1108–1119 shows a compositional bias: acidic residues; it reads EPMEICDSDNDA. Residues 1122–1139 are compositionally biased toward polar residues; sequence NGTNPDTKCQDQQDSTTP. The stretch at 1537–1573 is one HEAT repeat; it reads PSYETQLLALITELISDPDPLVRRVTVGLVVRVLRVS.

This sequence belongs to the CLASP family. As to quaternary structure, interacts with microtubules.

It is found in the cytoplasm. Its subcellular location is the cytoskeleton. It localises to the nucleus. The protein localises to the spindle. Its function is as follows. Microtubule binding protein that promotes the stabilization of dynamic microtubules. Required for mitotic spindle formation. This chain is Protein STU1 (STU1), found in Yarrowia lipolytica (strain CLIB 122 / E 150) (Yeast).